Here is a 159-residue protein sequence, read N- to C-terminus: Nucleotide-binding protein Avin_13410 (159 aa).

This sequence belongs to the YajQ family.

Its function is as follows. Nucleotide-binding protein. This chain is Nucleotide-binding protein Avin_13410, found in Azotobacter vinelandii (strain DJ / ATCC BAA-1303).